A 158-amino-acid chain; its full sequence is ATP synthase subunit beta, mitochondrial (158 aa).

This sequence belongs to the ATPase alpha/beta chains family. In terms of assembly, F-type ATPases have 2 components, CF(1) - the catalytic core - and CF(0) - the membrane proton channel. CF(1) has five subunits: alpha(3), beta(3), gamma(1), delta(1), epsilon(1). CF(0) has three main subunits: a, b and c.

The protein resides in the mitochondrion. It is found in the mitochondrion inner membrane. The catalysed reaction is ATP + H2O + 4 H(+)(in) = ADP + phosphate + 5 H(+)(out). Functionally, mitochondrial membrane ATP synthase (F(1)F(0) ATP synthase or Complex V) produces ATP from ADP in the presence of a proton gradient across the membrane which is generated by electron transport complexes of the respiratory chain. F-type ATPases consist of two structural domains, F(1) - containing the extramembraneous catalytic core, and F(0) - containing the membrane proton channel, linked together by a central stalk and a peripheral stalk. During catalysis, ATP synthesis in the catalytic domain of F(1) is coupled via a rotary mechanism of the central stalk subunits to proton translocation. Subunits alpha and beta form the catalytic core in F(1). Rotation of the central stalk against the surrounding alpha(3)beta(3) subunits leads to hydrolysis of ATP in three separate catalytic sites on the beta subunits. In Schizaphis graminum (Green bug aphid), this protein is ATP synthase subunit beta, mitochondrial.